A 124-amino-acid polypeptide reads, in one-letter code: Putative membrane protein insertion efficiency factor (124 aa).

This sequence belongs to the UPF0161 family.

The protein localises to the cell inner membrane. Functionally, could be involved in insertion of integral membrane proteins into the membrane. The chain is Putative membrane protein insertion efficiency factor from Psychrobacter arcticus (strain DSM 17307 / VKM B-2377 / 273-4).